We begin with the raw amino-acid sequence, 431 residues long: Bifunctional protein GlmU (431 aa).

The tract at residues 1–223 (MNLSIVILAA…EENFKGVNSK (223 aa)) is pyrophosphorylase. UDP-N-acetyl-alpha-D-glucosamine contacts are provided by residues 8–11 (LAAG), lysine 22, glutamine 74, and 81–82 (GT). Aspartate 102 lines the Mg(2+) pocket. UDP-N-acetyl-alpha-D-glucosamine contacts are provided by glycine 135, glutamate 149, asparagine 164, and asparagine 221. Asparagine 221 is a binding site for Mg(2+). Positions 224–244 (ADLAEAEAIMTGRIRRRWMRE) are linker. The interval 245 to 431 (GVRMRLPETI…FFARYFSSSK (187 aa)) is N-acetyltransferase. Arginine 308 and lysine 325 together coordinate UDP-N-acetyl-alpha-D-glucosamine. The active-site Proton acceptor is the histidine 336. 2 residues coordinate UDP-N-acetyl-alpha-D-glucosamine: tyrosine 339 and asparagine 350. Residues alanine 353, 359–360 (NY), serine 378, alanine 396, and arginine 413 each bind acetyl-CoA.

The protein in the N-terminal section; belongs to the N-acetylglucosamine-1-phosphate uridyltransferase family. It in the C-terminal section; belongs to the transferase hexapeptide repeat family. As to quaternary structure, homotrimer. It depends on Mg(2+) as a cofactor.

Its subcellular location is the cytoplasm. It carries out the reaction alpha-D-glucosamine 1-phosphate + acetyl-CoA = N-acetyl-alpha-D-glucosamine 1-phosphate + CoA + H(+). The catalysed reaction is N-acetyl-alpha-D-glucosamine 1-phosphate + UTP + H(+) = UDP-N-acetyl-alpha-D-glucosamine + diphosphate. It participates in nucleotide-sugar biosynthesis; UDP-N-acetyl-alpha-D-glucosamine biosynthesis; N-acetyl-alpha-D-glucosamine 1-phosphate from alpha-D-glucosamine 6-phosphate (route II): step 2/2. The protein operates within nucleotide-sugar biosynthesis; UDP-N-acetyl-alpha-D-glucosamine biosynthesis; UDP-N-acetyl-alpha-D-glucosamine from N-acetyl-alpha-D-glucosamine 1-phosphate: step 1/1. Its pathway is bacterial outer membrane biogenesis; LPS lipid A biosynthesis. Catalyzes the last two sequential reactions in the de novo biosynthetic pathway for UDP-N-acetylglucosamine (UDP-GlcNAc). The C-terminal domain catalyzes the transfer of acetyl group from acetyl coenzyme A to glucosamine-1-phosphate (GlcN-1-P) to produce N-acetylglucosamine-1-phosphate (GlcNAc-1-P), which is converted into UDP-GlcNAc by the transfer of uridine 5-monophosphate (from uridine 5-triphosphate), a reaction catalyzed by the N-terminal domain. The sequence is that of Bifunctional protein GlmU from Wolinella succinogenes (strain ATCC 29543 / DSM 1740 / CCUG 13145 / JCM 31913 / LMG 7466 / NCTC 11488 / FDC 602W) (Vibrio succinogenes).